The sequence spans 387 residues: Eukaryotic translation initiation factor 3 subunit M (387 aa).

Residues 181–340 form the PCI domain; that stretch reads LSSKVMIELL…RKVHISSTMH (160 aa).

The protein belongs to the eIF-3 subunit M family. In terms of assembly, component of the eukaryotic translation initiation factor 3 (eIF-3) complex. The eIF-3 complex interacts with pix.

It localises to the cytoplasm. The protein localises to the golgi apparatus. Functionally, component of the eukaryotic translation initiation factor 3 (eIF-3) complex, which is involved in protein synthesis of a specialized repertoire of mRNAs and, together with other initiation factors, stimulates binding of mRNA and methionyl-tRNAi to the 40S ribosome. The eIF-3 complex specifically targets and initiates translation of a subset of mRNAs involved in cell proliferation. The chain is Eukaryotic translation initiation factor 3 subunit M from Drosophila ananassae (Fruit fly).